Reading from the N-terminus, the 193-residue chain is MIKLVFRYSPTKTVDGFNELAFGLGDGLPWGRVKKDLQNFKARTEGTIMIMGAKTFQSLPTLLPGRSHIVVCDLARDYPVTKDGDLAHFYITWEQYITYISGGEIQVSSPNAPFETMLDQNSKVSVIGGPALLYAALPYADEVVVSRIVKRHRVNSTVQLDASFLDDISKREMVETHWYKIDEVTTLTESVYK.

In terms of domain architecture, DHFR spans 1 to 193 (MIKLVFRYSP…VTTLTESVYK (193 aa)). NADP(+) contacts are provided by residues R7, 22 to 27 (FGLGDG), 52 to 55 (GAKT), and 73 to 77 (DLARD).

Belongs to the dihydrofolate reductase family.

The enzyme catalyses (6S)-5,6,7,8-tetrahydrofolate + NADP(+) = 7,8-dihydrofolate + NADPH + H(+). Its pathway is cofactor biosynthesis; tetrahydrofolate biosynthesis; 5,6,7,8-tetrahydrofolate from 7,8-dihydrofolate: step 1/1. Functionally, key enzyme in folate metabolism. Catalyzes an essential reaction for de novo glycine and purine synthesis, and for DNA precursor synthesis. The polypeptide is Dihydrofolate reductase (frd) (Escherichia coli (Bacteriophage T4)).